A 1341-amino-acid polypeptide reads, in one-letter code: uncharacterized protein (1341 aa).

Residues 41-68 constitute a DNA-binding region (zn(2)-C6 fungal-type); that stretch reads CLLCRRRKQRCDHKLPSCTACLKAGIKC. 5 stretches are compositionally biased toward low complexity: residues 72-93, 779-791, 864-906, 920-967, and 1036-1050; these read SKYSSSTSNSNTNNNTPTAGTV, SNSANAANLSNSN, SNSS…NDNN, NHNN…GNNS, and SPSKSSSISTASSHS. Disordered regions lie at residues 72–100, 770–804, 864–971, and 1031–1116; these read SKYSSSTSNSNTNNNTPTAGTVPPTPHPV, ISSGDTLHDSNSANAANLSNSNDKNISHNGGMPPA, SNSS…QYVR, and TMTN…NSNP. Polar residues predominate over residues 1057–1076; it reads MTQSPTPYPQTSNMLPQQHV. Over residues 1078–1090 the composition is skewed to low complexity; sequence RPLPQQQREQPQQ. Positions 1091–1116 are enriched in polar residues; sequence HITSPQRFSESNFTNQLNNGMINSNP. Residue serine 1143 is modified to Phosphoserine. Over residues 1220–1230 the composition is skewed to polar residues; that stretch reads SQEPSSLSMDK. The interval 1220–1240 is disordered; it reads SQEPSSLSMDKQQQQHQQQNM.

Its subcellular location is the nucleus. This is an uncharacterized protein from Saccharomyces cerevisiae (strain ATCC 204508 / S288c) (Baker's yeast).